An 80-amino-acid chain; its full sequence is Ubiquitin-like protein NEDD8-like protein 2 (80 aa).

Belongs to the ubiquitin family.

The sequence is that of Ubiquitin-like protein NEDD8-like protein 2 (nedd8l2) from Dictyostelium discoideum (Social amoeba).